We begin with the raw amino-acid sequence, 306 residues long: Curved DNA-binding protein (306 aa).

The J domain maps to 5–69 (DYYAIMGVKP…QRRAEYDQLW (65 aa)).

The protein localises to the cytoplasm. The protein resides in the nucleoid. DNA-binding protein that preferentially recognizes a curved DNA sequence. It is probably a functional analog of DnaJ; displays overlapping activities with DnaJ, but functions under different conditions, probably acting as a molecular chaperone in an adaptive response to environmental stresses other than heat shock. Lacks autonomous chaperone activity; binds native substrates and targets them for recognition by DnaK. Its activity is inhibited by the binding of CbpM. This is Curved DNA-binding protein from Salmonella choleraesuis (strain SC-B67).